Reading from the N-terminus, the 130-residue chain is Small ribosomal subunit protein uS11 (130 aa).

Belongs to the universal ribosomal protein uS11 family. In terms of assembly, part of the 30S ribosomal subunit. Interacts with proteins S7 and S18. Binds to IF-3.

In terms of biological role, located on the platform of the 30S subunit, it bridges several disparate RNA helices of the 16S rRNA. Forms part of the Shine-Dalgarno cleft in the 70S ribosome. This Gloeothece citriformis (strain PCC 7424) (Cyanothece sp. (strain PCC 7424)) protein is Small ribosomal subunit protein uS11.